Reading from the N-terminus, the 35-residue chain is Fatty acid synthase (35 aa).

The active site involves Ser-12.

As to quaternary structure, homodimer which is arranged in a head to tail fashion. Interacts with CEACAM1; this interaction is insulin and phosphorylation-dependent; reduces fatty-acid synthase activity.

The protein localises to the cytoplasm. It is found in the melanosome. The catalysed reaction is acetyl-CoA + n malonyl-CoA + 2n NADPH + 2n H(+) = a long-chain fatty acid + (n+1) CoA + n CO2 + 2n NADP(+).. Functionally, fatty acid synthetase catalyzes the formation of long-chain fatty acids from acetyl-CoA, malonyl-CoA and NADPH. This multifunctional protein has 7 catalytic activities as an acyl carrier protein. Its function is as follows. This fragment is from the acyltransferase domain of the fatty acid synthetase. This Capra hircus (Goat) protein is Fatty acid synthase (FASN).